A 183-amino-acid polypeptide reads, in one-letter code: NADH-quinone oxidoreductase subunit A (183 aa).

Helical transmembrane passes span 11-31, 63-83, and 98-118; these read IIAFVIGVTFLCVFMLTVPLL, FYLVAIFFVVFDLEALYLYAW, and VVIFVVDLLIALVYAFSVGAL. The disordered stretch occupies residues 159-183; the sequence is TGQIPAQSSGRVKSKTTPALSSEKE.

Belongs to the complex I subunit 3 family. As to quaternary structure, NDH-1 is composed of 14 different subunits. Subunits NuoA, H, J, K, L, M, N constitute the membrane sector of the complex.

It is found in the cell inner membrane. It catalyses the reaction a quinone + NADH + 5 H(+)(in) = a quinol + NAD(+) + 4 H(+)(out). NDH-1 shuttles electrons from NADH, via FMN and iron-sulfur (Fe-S) centers, to quinones in the respiratory chain. The immediate electron acceptor for the enzyme in this species is believed to be ubiquinone. Couples the redox reaction to proton translocation (for every two electrons transferred, four hydrogen ions are translocated across the cytoplasmic membrane), and thus conserves the redox energy in a proton gradient. In Acinetobacter baumannii (strain AYE), this protein is NADH-quinone oxidoreductase subunit A.